The sequence spans 349 residues: Insulin gene enhancer protein isl-1 (349 aa).

2 LIM zinc-binding domains span residues 17–70 (CVGC…CKRD) and 79–133 (CAKC…RADH). The segment at residues 181 to 240 (TTRVRTVLNEKQLHTLRTCYNANPRPDALMKEQLVEMTGLSPRVIRVWFQNKRCKDKKRS) is a DNA-binding region (homeobox). Residues 312–349 (VNFSEGGPGSNSTGSEVASMSSQLPDTPNSMVASPIEA) are disordered. Residues 321-343 (SNSTGSEVASMSSQLPDTPNSMV) are compositionally biased toward polar residues.

It localises to the nucleus. Its function is as follows. DNA-binding transcriptional activator. Recognizes and binds to the consensus octamer binding site 5'-ATAATTAA-3' in promoter of target genes. Plays a fundamental role in the gene regulatory network essential for retinal ganglion cell (RGC) differentiation. May be involved in subtype specialization of primary motoneurons. May bind to insulin gene enhancer sequences. Essential for heart development. This is Insulin gene enhancer protein isl-1 (isl1) from Danio rerio (Zebrafish).